The primary structure comprises 93 residues: Zinc metalloproteinase-disintegrin-like leucurogin (93 aa).

The Disintegrin domain maps to 8-93; sequence PPVCGNELLE…SECPADVGHK (86 aa). Residues V10, N13, L15, E17, E20, and D23 each contribute to the Ca(2+) site. 7 disulfides stabilise this stretch: C11/C40, C22/C35, C24/C30, C34/C57, C48/C54, C53/C79, and C66/C86. A D/ECD-tripeptide motif is present at residues 72-74; sequence ECD. Ca(2+) is bound by residues D74, P75, E77, D89, and V90. The segment at 74-93 is disordered; it reads DPAEHCTGQSSECPADVGHK.

The protein belongs to the venom metalloproteinase (M12B) family. P-III subfamily. As to quaternary structure, monomer. It depends on Zn(2+) as a cofactor. N-glycosylated. As to expression, expressed by the venom gland.

Its subcellular location is the secreted. In terms of biological role, snake venom zinc metalloprotease that possesses hemorrhagic activity. The disintegrin-like domain has been expressed and named leucurogin. This recombinant disintegrin is able to inhibit collagen-induced platelet aggregation but not ADP- or arachidonic acid-induced platelet aggregation. Furthermore, it inhibits the adhesion of human fibroblasts to collagen type I. It also reduces adhesion and migration of human fibroblasts and inhibits migration and proliferation of human and mouse melanoma cell lines (BLM, and B16-F10-Nex2). In vitro, it inhibits the vascular structures formation by endothelial cells. In addition, it inhibits the growth of experimental Ehrlich tumor and has anti-angiogenesis effect on the sponge implant model. In vivo, when intraperitoneally injected into mice, it inhibits lung metastasis of B16F10 Nex-2 cells. In the treatment of human melanoma, grafted intradermally in the nude mice flank, it inhibits tumor growth. In Bothrops leucurus (Whitetail lancehead), this protein is Zinc metalloproteinase-disintegrin-like leucurogin.